The sequence spans 441 residues: MAVGAEPKAAVRETVKRNIMTLQPVDVTWRFAGLQEYFRKLMPFFLKNLRHDKIFLSAGSLAFQTLLSIVPFLAVTLSVLRIFSFFASLNRYLEEFIFQNFIPSAGEDLRIHFEAFIGKTSTVPLIGGLLLFIIALSLISTIDRTLNDIWKVRAPRKPIQAFTLYWTVLTLGPVLIGSSLGASSYVWYTVFTEGPLLELKIRLISFLPFVNSLLSFLLLYMLVPNRRVKLPHAFSGAVAAALLFELSKKWFVFYVSRFATFEHIYGAISAVPLLFFWIYIGWLVVLTGAELVFSIGNVLSSSVEPVPKRLLPGLTQLFSVLGTIWRAQQDGSPVHIGTRVVRGALSATAADRIVDLLLQKGVVHETSGGELVVSADLYQMTLFDLYGLIPWELAVHEDLEGYDDDGSETFASLEKDVTVCLKETMAVPVALLLQDSTNQCI.

6 helical membrane-spanning segments follow: residues 54–74 (IFLS…PFLA), 122–142 (TVPL…ISTI), 161–181 (AFTL…SSLG), 203–223 (LISF…YMLV), 233–253 (AFSG…WFVF), and 266–286 (GAIS…LVVL).

This sequence belongs to the UPF0761 family.

Its subcellular location is the cell inner membrane. The protein is UPF0761 membrane protein Clim_1521 of Chlorobium limicola (strain DSM 245 / NBRC 103803 / 6330).